The primary structure comprises 390 residues: Chorismate synthase (390 aa).

R48 and R54 together coordinate NADP(+). FMN contacts are provided by residues 125–127 (RSS), 238–239 (NA), G278, 293–297 (KPTSS), and R319. Residues 359-390 (PRIPGSTTNQIHPVEMQASAPRAEDPEPDESS) form a disordered region.

This sequence belongs to the chorismate synthase family. As to quaternary structure, homotetramer. It depends on FMNH2 as a cofactor.

It catalyses the reaction 5-O-(1-carboxyvinyl)-3-phosphoshikimate = chorismate + phosphate. It participates in metabolic intermediate biosynthesis; chorismate biosynthesis; chorismate from D-erythrose 4-phosphate and phosphoenolpyruvate: step 7/7. Its function is as follows. Catalyzes the anti-1,4-elimination of the C-3 phosphate and the C-6 proR hydrogen from 5-enolpyruvylshikimate-3-phosphate (EPSP) to yield chorismate, which is the branch point compound that serves as the starting substrate for the three terminal pathways of aromatic amino acid biosynthesis. This reaction introduces a second double bond into the aromatic ring system. The chain is Chorismate synthase from Nitrosomonas europaea (strain ATCC 19718 / CIP 103999 / KCTC 2705 / NBRC 14298).